The sequence spans 293 residues: Histamine N-methyltransferase B (293 aa).

Glutamate 28 provides a ligand contact to substrate. The S-adenosyl-L-methionine site is built by glycine 60, glutamate 89, glutamine 94, serine 120, and isoleucine 142. Position 283 (asparagine 283) interacts with substrate.

Belongs to the class I-like SAM-binding methyltransferase superfamily. HNMT family. In terms of assembly, monomer.

It is found in the cytoplasm. It catalyses the reaction histamine + S-adenosyl-L-methionine = N(tau)-methylhistamine + S-adenosyl-L-homocysteine + H(+). In terms of biological role, inactivates histamine by N-methylation. Plays an important role in degrading histamine and in regulating the airway response to histamine. The chain is Histamine N-methyltransferase B (hnmt-b) from Xenopus laevis (African clawed frog).